The following is a 168-amino-acid chain: MNSKGQYPTQPTYPVQPPGNPVYPQTLHLPQAPPYTDAPPAYSELYRPSFVHPGAATVPTMSAAFPGASLYLPMAQSVAVGPLGSTIPMAYYPVGPIYPPGSTVLVEGGYDAGARFGAGATAGNIPPPPPGCPPNAAQLAVMQGANVLVTQRKGNFFMGGSDGGYTIW.

A compositionally biased stretch (low complexity) spans 1–13; the sequence is MNSKGQYPTQPTY. A disordered region spans residues 1 to 25; that stretch reads MNSKGQYPTQPTYPVQPPGNPVYPQ. Positions 39 to 42 match the PPAY motif; sequence PPAY. Position 77 is a phosphoserine (serine 77).

As to quaternary structure, interacts with SOX6. Interacts with DAZ1 and DAZL. Interacts with IL17RB. May interact with FAM168B. Interacts with INCA1. Interacts with EIF4G1 and EIF4G2. Interacts (via PPAY motif) with NEDD4 (via WW domains). Interacts with transcription factor TCF4; the interaction results in localization of DAZAP2 to the nucleus. Interacts with transcription factors TCF7 and TCF7L1. Interacts with transcription factor LEF1. Interacts with serine/threonine-protein kinase HIPK2; the interaction results in phosphorylation of DAZAP2 which causes localization of DAZAP2 to the nucleus, reduces interaction of DAZAP2 with HIPK2 and prevents DAZAP2-dependent degradation of HIPK2. Interacts with ubiquitin ligase SIAH1; the interaction is decreased following phosphorylation of DAZAP2 by HIPK2. Interacts with TP53; the interaction is triggered by DNA damage. In terms of processing, ubiquitinated by SMURF2, leading to proteasomal degradation. Ubiquitinated by NEDD4, leading to proteasomal degradation. Post-translationally, following DNA damage, phosphorylated by HIPK2 which promotes DAZAP2 localization to the nucleus, reduces interaction of DAZAP2 with HIPK2 and SIAH1, and prevents DAZAP2-dependent ubiquitination of HIPK2 by E3 ubiquitin-protein ligase SIAH1 and subsequent HIPK2 proteasomal degradation.

The protein localises to the cytoplasm. It is found in the nucleus. Its subcellular location is the nucleus speckle. The protein resides in the nuclear body. It localises to the stress granule. In unstressed cells, promotes SIAH1-mediated polyubiquitination and degradation of the serine/threonine-protein kinase HIPK2, probably by acting as a loading factor that potentiates complex formation between HIPK2 and ubiquitin ligase SIAH1. In response to DNA damage, localizes to the nucleus following phosphorylation by HIPK2 and modulates the expression of a subset of TP53/p53 target genes by binding to TP53 at target gene promoters. This limits the expression of a number of cell death-mediating TP53 target genes, reducing DNA damage-induced cell death. Enhances the binding of transcription factor TCF7L2/TCF4, a Wnt signaling pathway effector, to the promoters of target genes. Plays a role in stress granule formation. The polypeptide is DAZ-associated protein 2 (Bos taurus (Bovine)).